The primary structure comprises 205 residues: Ras-like protein 3 (205 aa).

16 to 23 (GGGGVGKS) lines the GTP pocket. The short motif at 38 to 46 (YDPTIEDSY) is the Effector region element. GTP is bound by residues 63-67 (DTAGQ) and 122-125 (NKCD). Position 202 is a cysteine methyl ester (Cys202). Cys202 is lipidated: S-farnesyl cysteine. Residues 203 to 205 (ILM) constitute a propeptide, removed in mature form.

Belongs to the small GTPase superfamily. Ras family.

It is found in the cell membrane. It carries out the reaction GTP + H2O = GDP + phosphate + H(+). Its activity is regulated as follows. Alternates between an inactive form bound to GDP and an active form bound to GTP. Activated by a guanine nucleotide-exchange factor (GEF) and inactivated by a GTPase-activating protein (GAP). This chain is Ras-like protein 3 (RAS3), found in Mucor circinelloides f. lusitanicus (Mucor racemosus var. lusitanicus).